A 73-amino-acid chain; its full sequence is Translation initiation factor IF-1 (73 aa).

In terms of domain architecture, S1-like spans M1–K72.

The protein belongs to the IF-1 family. Component of the 30S ribosomal translation pre-initiation complex which assembles on the 30S ribosome in the order IF-2 and IF-3, IF-1 and N-formylmethionyl-tRNA(fMet); mRNA recruitment can occur at any time during PIC assembly.

It localises to the cytoplasm. Its function is as follows. One of the essential components for the initiation of protein synthesis. Stabilizes the binding of IF-2 and IF-3 on the 30S subunit to which N-formylmethionyl-tRNA(fMet) subsequently binds. Helps modulate mRNA selection, yielding the 30S pre-initiation complex (PIC). Upon addition of the 50S ribosomal subunit IF-1, IF-2 and IF-3 are released leaving the mature 70S translation initiation complex. In Legionella pneumophila (strain Paris), this protein is Translation initiation factor IF-1.